Reading from the N-terminus, the 324-residue chain is Protein ChrB (324 aa).

Together with ChrA1, this protein reduces chromate accumulation and is essential for chromate resistance, possibly as a regulatory protein. This is Protein ChrB from Cupriavidus metallidurans (strain ATCC 43123 / DSM 2839 / NBRC 102507 / CH34) (Ralstonia metallidurans).